The following is a 66-amino-acid chain: Conotoxin Cal6.38 (66 aa).

The first 22 residues, 1-22 (MKLTFVLIVAVLVLAVCNFTVA), serve as a signal peptide directing secretion. Disulfide bonds link C38-C55, C45-C59, and C54-C64.

The protein belongs to the conotoxin O1 superfamily. As to expression, expressed by the venom duct.

It localises to the secreted. In terms of biological role, probable neurotoxin. In Californiconus californicus (California cone), this protein is Conotoxin Cal6.38.